A 158-amino-acid polypeptide reads, in one-letter code: UPF0178 protein Rpal_2485 (158 aa).

This sequence belongs to the UPF0178 family.

The sequence is that of UPF0178 protein Rpal_2485 from Rhodopseudomonas palustris (strain TIE-1).